Here is a 128-residue protein sequence, read N- to C-terminus: Nucleoside diphosphate kinase B (128 aa).

Met-1 carries the post-translational modification N-acetylmethionine. Lys-9, Phe-39, Thr-70, Arg-81, and Asn-91 together coordinate ATP. His-94 (pros-phosphohistidine intermediate) is an active-site residue.

The protein belongs to the NDK family. Mg(2+) serves as cofactor.

It localises to the cytoplasm. It is found in the nucleus. The protein resides in the cell projection. Its subcellular location is the lamellipodium. The protein localises to the ruffle. The enzyme catalyses a 2'-deoxyribonucleoside 5'-diphosphate + ATP = a 2'-deoxyribonucleoside 5'-triphosphate + ADP. It carries out the reaction a ribonucleoside 5'-diphosphate + ATP = a ribonucleoside 5'-triphosphate + ADP. Functionally, major role in the synthesis of nucleoside triphosphates other than ATP. This is Nucleoside diphosphate kinase B (nme2) from Merluccius australis australis (Austral hake).